The sequence spans 167 residues: Lipoprotein signal peptidase (167 aa).

The next 4 helical transmembrane spans lie at 8-28 (TFLTLLLLASIDWVSKLVVLL), 46-66 (WGHFSFLIIPSFNEGAAFGLF), 68-88 (QYKIPLLIFRVCVILGLALFL), and 101-121 (IALTLILAGALGNVGDILLHG). Active-site residues include D125 and D143. A helical membrane pass occupies residues 139–159 (FNLADAFISIGTLLLIGHLYF).

It belongs to the peptidase A8 family.

It is found in the cell inner membrane. It catalyses the reaction Release of signal peptides from bacterial membrane prolipoproteins. Hydrolyzes -Xaa-Yaa-Zaa-|-(S,diacylglyceryl)Cys-, in which Xaa is hydrophobic (preferably Leu), and Yaa (Ala or Ser) and Zaa (Gly or Ala) have small, neutral side chains.. The protein operates within protein modification; lipoprotein biosynthesis (signal peptide cleavage). Its function is as follows. This protein specifically catalyzes the removal of signal peptides from prolipoproteins. This is Lipoprotein signal peptidase from Chlamydia trachomatis serovar L2b (strain UCH-1/proctitis).